Reading from the N-terminus, the 339-residue chain is Neutrophil cytosol factor 4 (339 aa).

The 122-residue stretch at 19–140 folds into the PX domain; it reads DVAVSANIAD…IFFYQSAYDA (122 aa). Residues 58–60 and 92–94 each bind a 1,2-diacyl-sn-glycero-3-phospho-(1D-myo-inositol-3-phosphate); these read RYR and KVY. Phosphothreonine is present on Thr-154. In terms of domain architecture, SH3 spans 170–229; that stretch reads MEAPRAEALFDFTGNSKLELSFKAGDVIFLLSKINKDWLEGTSQGATGIFPGSFVKILKD. Positions 237–329 constitute a PB1 domain; that stretch reads TNWLRCYFYE…FPWKLHVTQK (93 aa). The residue at position 315 (Ser-315) is a Phosphoserine.

In terms of assembly, component of the phagocyte NADPH oxidase complex composed of an obligatory core heterodimer formed by the membrane proteins CYBA and CYBB and the cytosolic regulatory subunits NCF1/p47-phox, NCF2/p67-phox, NCF4/p40-phox and the small GTPase RAC1 or RAC2. Part of a cytosolic complex composed at least by NCF1, NCF2 and NCF4. Interacts with NCF2. Interacts with NCF1. The NCF2-NCF4 complex interacts with GBP7 (via GB1/RHD3-type G domain).

It localises to the cytoplasm. Its subcellular location is the cytosol. The protein localises to the endosome membrane. The protein resides in the membrane. Its function is as follows. Subunit of the phagocyte NADPH oxidase complex that mediates the transfer of electrons from cytosolic NADPH to O2 to produce the superoxide anion (O2(-)). In the activated complex, electrons are first transferred from NADPH to flavin adenine dinucleotide (FAD) and subsequently transferred via two heme molecules to molecular oxygen, producing superoxide through an outer-sphere reaction. Activation of the NADPH oxidase complex is initiated by the assembly of cytosolic subunits of the NADPH oxidase complex with the core NADPH oxidase complex to form a complex at the plasma membrane or phagosomal membrane. This activation process is initiated by phosphorylation dependent binding of the cytosolic NCF1/p47-phox subunit to the C-terminus of CYBA/p22-phox. The protein is Neutrophil cytosol factor 4 of Mus musculus (Mouse).